The primary structure comprises 148 residues: [Ribosomal protein bS18]-alanine N-acetyltransferase (148 aa).

In terms of domain architecture, N-acetyltransferase spans asparagine 2–serine 147. Acetyl-CoA is bound by residues isoleucine 69–valine 71 and arginine 77–arginine 82. Glutamate 103 (proton acceptor) is an active-site residue. An acetyl-CoA-binding site is contributed by asparagine 108. The Proton donor role is filled by tyrosine 115.

Belongs to the acetyltransferase family. RimI subfamily.

Its subcellular location is the cytoplasm. The enzyme catalyses N-terminal L-alanyl-[ribosomal protein bS18] + acetyl-CoA = N-terminal N(alpha)-acetyl-L-alanyl-[ribosomal protein bS18] + CoA + H(+). Functionally, acetylates the N-terminal alanine of ribosomal protein bS18. In Salmonella typhimurium (strain LT2 / SGSC1412 / ATCC 700720), this protein is [Ribosomal protein bS18]-alanine N-acetyltransferase.